The sequence spans 206 residues: Large ribosomal subunit protein uL4 (206 aa).

The protein belongs to the universal ribosomal protein uL4 family. As to quaternary structure, part of the 50S ribosomal subunit.

One of the primary rRNA binding proteins, this protein initially binds near the 5'-end of the 23S rRNA. It is important during the early stages of 50S assembly. It makes multiple contacts with different domains of the 23S rRNA in the assembled 50S subunit and ribosome. Functionally, forms part of the polypeptide exit tunnel. This is Large ribosomal subunit protein uL4 from Bradyrhizobium diazoefficiens (strain JCM 10833 / BCRC 13528 / IAM 13628 / NBRC 14792 / USDA 110).